A 183-amino-acid polypeptide reads, in one-letter code: Holliday junction branch migration complex subunit RuvA (183 aa).

Residues 1 to 63 (MIVGLIGVVE…EDAHLLYGFL (63 aa)) form a domain I region. A domain II region spans residues 64-139 (EEGEKILFER…FFIQDENRPA (76 aa)). Ala-139 is a region of interest (flexible linker). A domain III region spans residues 139–183 (ARNEVFLALESLGFKSAEINQVLKTLKPNLSIEAAIKEALQQLRS).

The protein belongs to the RuvA family. As to quaternary structure, homotetramer. Forms an RuvA(8)-RuvB(12)-Holliday junction (HJ) complex. HJ DNA is sandwiched between 2 RuvA tetramers; dsDNA enters through RuvA and exits via RuvB. An RuvB hexamer assembles on each DNA strand where it exits the tetramer. Each RuvB hexamer is contacted by two RuvA subunits (via domain III) on 2 adjacent RuvB subunits; this complex drives branch migration. In the full resolvosome a probable DNA-RuvA(4)-RuvB(12)-RuvC(2) complex forms which resolves the HJ.

The protein resides in the cytoplasm. In terms of biological role, the RuvA-RuvB-RuvC complex processes Holliday junction (HJ) DNA during genetic recombination and DNA repair, while the RuvA-RuvB complex plays an important role in the rescue of blocked DNA replication forks via replication fork reversal (RFR). RuvA specifically binds to HJ cruciform DNA, conferring on it an open structure. The RuvB hexamer acts as an ATP-dependent pump, pulling dsDNA into and through the RuvAB complex. HJ branch migration allows RuvC to scan DNA until it finds its consensus sequence, where it cleaves and resolves the cruciform DNA. The chain is Holliday junction branch migration complex subunit RuvA from Helicobacter pylori (strain ATCC 700392 / 26695) (Campylobacter pylori).